A 397-amino-acid polypeptide reads, in one-letter code: Acetate kinase (397 aa).

Asn-8 contributes to the Mg(2+) binding site. Lys-15 is a binding site for ATP. Arg-89 contacts substrate. Asp-146 functions as the Proton donor/acceptor in the catalytic mechanism. Residues 206 to 210, 281 to 283, and 329 to 333 contribute to the ATP site; these read HLGNG, DLR, and GVGEN. Mg(2+) is bound at residue Glu-382.

This sequence belongs to the acetokinase family. Homodimer. Requires Mg(2+) as cofactor. Mn(2+) is required as a cofactor.

It localises to the cytoplasm. It catalyses the reaction acetate + ATP = acetyl phosphate + ADP. Its pathway is metabolic intermediate biosynthesis; acetyl-CoA biosynthesis; acetyl-CoA from acetate: step 1/2. Its function is as follows. Catalyzes the formation of acetyl phosphate from acetate and ATP. Can also catalyze the reverse reaction. The polypeptide is Acetate kinase (Bacillus cereus (strain ATCC 10987 / NRS 248)).